The primary structure comprises 350 residues: Methionine import ATP-binding protein MetN (350 aa).

The ABC transporter domain occupies 2 to 241 (IQIKNLKKEY…PQAPVTRSFV (240 aa)). Residue 38-45 (GHSGAGKS) coordinates ATP.

This sequence belongs to the ABC transporter superfamily. Methionine importer (TC 3.A.1.24) family. The complex is composed of two ATP-binding proteins (MetN), two transmembrane proteins (MetI) and a solute-binding protein (MetQ).

It localises to the cell inner membrane. It carries out the reaction L-methionine(out) + ATP + H2O = L-methionine(in) + ADP + phosphate + H(+). It catalyses the reaction D-methionine(out) + ATP + H2O = D-methionine(in) + ADP + phosphate + H(+). Part of the ABC transporter complex MetNIQ involved in methionine import. Responsible for energy coupling to the transport system. This is Methionine import ATP-binding protein MetN from Francisella tularensis subsp. tularensis (strain SCHU S4 / Schu 4).